We begin with the raw amino-acid sequence, 996 residues long: RNA2 polyprotein (996 aa).

The segment at 363–369 (LRYTIGG) is involved in tubule formation by the movement protein. The disordered stretch occupies residues 368–398 (GGSKPKNKLADKAHNEEAETSDSKGIIDPKD). A compositionally biased stretch (basic and acidic residues) spans 375 to 398 (KLADKAHNEEAETSDSKGIIDPKD).

As to quaternary structure, interacts with the large capsid protein. Interacts with the small capsid protein. Homomultimer; assembles as pentons. Interacts with the movement protein (via C-terminus). In terms of assembly, interacts (via C-terminus) with the large capsid protein. Specific enzymatic cleavages by picornain 3C-like protease in vivo yield mature proteins.

It is found in the host cell junction. Its subcellular location is the host plasmodesma. It localises to the virion. Responsible for viral RNA2 accumulation. May function by recruiting the RNA1-encoded polyprotein that contains the replication protein to RNA2 and enable its replication. Its function is as follows. Transports the viral genome to neighboring plant cells directly through plasmosdesmata, without any budding. The movement protein allows efficient cell to cell propagation, by bypassing the host cell wall barrier. Acts by forming a tubular structure at the host plasmodesmata, enlarging it enough to allow free passage of virion capsids. Binds to GTP and to single-stranded RNA and single-stranded DNA in a non-sequence-specific manner. Functionally, together with the mature small capsid protein, forms an icosahedral capsid (T=3) enclosing the viral positive strand RNA genome, with a diameter of approximately 300 Angstroms. The capsid is formed from 60 copies each of the large and the mature small capsid protein. The large capsid protein interacts with the viral RNA. In terms of biological role, together with the large capsid protein, forms an icosahedral capsid (T=3) enclosing the viral positive strand RNA genome, with a diameter of approximately 300 Angstroms. The capsid is formed from 60 copies each of the large and the mature small capsid protein. The mature small capsid protein forms the turrets at the fivefold axes of the viral particle. This chain is RNA2 polyprotein, found in Red clover mottle virus (RCMV).